The following is a 290-amino-acid chain: 33 kDa chaperonin (290 aa).

Cystine bridges form between cysteine 235-cysteine 237 and cysteine 268-cysteine 271.

Belongs to the HSP33 family. In terms of processing, under oxidizing conditions two disulfide bonds are formed involving the reactive cysteines. Under reducing conditions zinc is bound to the reactive cysteines and the protein is inactive.

The protein resides in the cytoplasm. Functionally, redox regulated molecular chaperone. Protects both thermally unfolding and oxidatively damaged proteins from irreversible aggregation. Plays an important role in the bacterial defense system toward oxidative stress. The chain is 33 kDa chaperonin from Streptococcus pyogenes serotype M6 (strain ATCC BAA-946 / MGAS10394).